The chain runs to 626 residues: Phosphomethylpyrimidine synthase (626 aa).

Substrate is bound by residues Asn237, Met266, Tyr295, His331, 351–353 (SRG), 392–395 (DGLR), and Glu431. His435 is a Zn(2+) binding site. Tyr458 is a substrate binding site. His499 serves as a coordination point for Zn(2+). Cys579, Cys582, and Cys587 together coordinate [4Fe-4S] cluster.

Belongs to the ThiC family. As to quaternary structure, homodimer. [4Fe-4S] cluster is required as a cofactor.

It catalyses the reaction 5-amino-1-(5-phospho-beta-D-ribosyl)imidazole + S-adenosyl-L-methionine = 4-amino-2-methyl-5-(phosphooxymethyl)pyrimidine + CO + 5'-deoxyadenosine + formate + L-methionine + 3 H(+). It functions in the pathway cofactor biosynthesis; thiamine diphosphate biosynthesis. In terms of biological role, catalyzes the synthesis of the hydroxymethylpyrimidine phosphate (HMP-P) moiety of thiamine from aminoimidazole ribotide (AIR) in a radical S-adenosyl-L-methionine (SAM)-dependent reaction. The polypeptide is Phosphomethylpyrimidine synthase (Cupriavidus necator (strain ATCC 17699 / DSM 428 / KCTC 22496 / NCIMB 10442 / H16 / Stanier 337) (Ralstonia eutropha)).